The sequence spans 244 residues: MSEIIYGIHAVKALLERDPQRFIEVYVLKGREDRRLTPLIHALESIGMTIQLANRQWLDNQTEGAVHQGIIAKVKPGRQYQENDLPDLLAQVETPFLLVLDGVTDPHNLGACLRSADAAGVHAVIIPRDRSAQLNATAKKVACGAAESVPLIRVTNLARTLRLLQEYNIWVVGTAGEADHTLYQSKLTGPMALVMGAEGEGMRRLTREHCDELISIPMVGSVSSLNVSVATGVCLFEAVRQRSS.

S-adenosyl-L-methionine-binding residues include glycine 196, isoleucine 216, and leucine 225.

The protein belongs to the class IV-like SAM-binding methyltransferase superfamily. RNA methyltransferase TrmH family. RlmB subfamily. As to quaternary structure, homodimer.

It is found in the cytoplasm. It catalyses the reaction guanosine(2251) in 23S rRNA + S-adenosyl-L-methionine = 2'-O-methylguanosine(2251) in 23S rRNA + S-adenosyl-L-homocysteine + H(+). Its function is as follows. Specifically methylates the ribose of guanosine 2251 in 23S rRNA. This is 23S rRNA (guanosine-2'-O-)-methyltransferase RlmB from Photorhabdus laumondii subsp. laumondii (strain DSM 15139 / CIP 105565 / TT01) (Photorhabdus luminescens subsp. laumondii).